We begin with the raw amino-acid sequence, 1211 residues long: Periplasmic acid trehalase ATC1 (1211 aa).

At 1-46 (MKRIRSLWFNAEASYSNLNNSPSLRNKNSTGNNSRSKNYRSFSRFD) the chain is on the cytoplasmic side. Residues 47 to 67 (LINSILLLMMLFLLAIFVTAL) traverse the membrane as a helical segment. At 68-1211 (YLTKSSRLTY…ATIKEIVLND (1144 aa)) the chain is on the periplasmic side. Residues 70-131 (TKSSRLTYSH…NTAYYDDENM (62 aa)) form a required for cell surface targeting region. 10 N-linked (GlcNAc...) asparagine glycosylation sites follow: N98, N207, N238, N247, N255, N259, N325, N370, N376, and N488. 513-514 (WD) lines the substrate pocket. N539, N568, N628, and N638 each carry an N-linked (GlcNAc...) asparagine glycan. The active-site Proton donor is the E644. 2 N-linked (GlcNAc...) asparagine glycosylation sites follow: N696 and N705. 711–712 (KQ) is a substrate binding site. Residues N879, N897, N910, N972, N990, N1031, N1049, N1064, N1147, and N1157 are each glycosylated (N-linked (GlcNAc...) asparagine).

It belongs to the glycosyl hydrolase 65 family. Post-translationally, glycosylated.

Its subcellular location is the membrane. It is found in the vacuole lumen. It localises to the periplasm. The catalysed reaction is alpha,alpha-trehalose + H2O = alpha-D-glucose + beta-D-glucose. In terms of biological role, periplasmic acid trehalase that catalyzes hydrolysis of the disaccharide trehalose and required for growth on trehalose as carbon source. Growth on trehalose is strictly respiratory. In Saccharomyces cerevisiae (strain CEN.PK113-7D) (Baker's yeast), this protein is Periplasmic acid trehalase ATC1.